Here is a 342-residue protein sequence, read N- to C-terminus: Glycerol-3-phosphate dehydrogenase [NAD(P)+] (342 aa).

The NADPH site is built by tryptophan 11, arginine 31, and lysine 102. Positions 102 and 132 each coordinate sn-glycerol 3-phosphate. Alanine 136 is a binding site for NADPH. Residues lysine 187, aspartate 240, serine 250, arginine 251, and asparagine 252 each contribute to the sn-glycerol 3-phosphate site. The Proton acceptor role is filled by lysine 187. Residue arginine 251 coordinates NADPH. Glutamate 277 lines the NADPH pocket.

It belongs to the NAD-dependent glycerol-3-phosphate dehydrogenase family.

The protein resides in the cytoplasm. It catalyses the reaction sn-glycerol 3-phosphate + NAD(+) = dihydroxyacetone phosphate + NADH + H(+). The enzyme catalyses sn-glycerol 3-phosphate + NADP(+) = dihydroxyacetone phosphate + NADPH + H(+). It functions in the pathway membrane lipid metabolism; glycerophospholipid metabolism. Catalyzes the reduction of the glycolytic intermediate dihydroxyacetone phosphate (DHAP) to sn-glycerol 3-phosphate (G3P), the key precursor for phospholipid synthesis. This Symbiobacterium thermophilum (strain DSM 24528 / JCM 14929 / IAM 14863 / T) protein is Glycerol-3-phosphate dehydrogenase [NAD(P)+].